Consider the following 455-residue polypeptide: Tyramine receptor Ser-2 (455 aa).

Topologically, residues 1 to 60 (MFRNYTDSVQEMVLRAIDSIRDSVINASSAVSTTTLPPLDIPMTSMKPPSIIPTVELVLG) are extracellular. Asn-4 and Asn-26 each carry an N-linked (GlcNAc...) asparagine glycan. The helical transmembrane segment at 61-83 (TITYLVIIAMTVVGNTLVVVAVF) threads the bilayer. Topologically, residues 84-93 (SYRPLKKVQN) are cytoplasmic. A helical transmembrane segment spans residues 94-115 (YFLVSLAASDLAVAIFVMPLHV). At 116 to 133 (VTFLAGGKWLLGVTVCQF) the chain is on the extracellular side. Residues Cys-131 and Cys-209 are joined by a disulfide bond. Residues 134–154 (FTTADILLCTSSILNLCAIAL) traverse the membrane as a helical segment. Residues 155–174 (DRYWAIHNPINYAQKRTTKF) are Cytoplasmic-facing. Residues 175–197 (VCIVIVIVWILSMLISVPPIIGW) form a helical membrane-spanning segment. Residues 198-221 (NNWQENMMEDSCGLSTEKAFVVFS) are Extracellular-facing. The chain crosses the membrane as a helical span at residues 222–243 (AAGSFFLPLLVMVVVYVKIFIS). Over 244–370 (ARQRIRTNRG…VAKEKRAAKT (127 aa)) the chain is Cytoplasmic. A helical membrane pass occupies residues 371-392 (IAVIIFVFSFCWLPFFVAYVIR). The Extracellular segment spans residues 393–407 (PFCETCKLHAKVEQA). A helical transmembrane segment spans residues 408–428 (FTWLGYINSSLNPFLYGILNL). At 429–455 (EFRRAFKKILCPKAVLEQRRRRMSAQP) the chain is on the cytoplasmic side.

This sequence belongs to the G-protein coupled receptor 1 family. In terms of tissue distribution, the different isoforms are expressed in specific, but overlapping sets of sensory, inter- and motor neurons, including AIY, AIZ and RIA interneurons. They are also expressed in pharyngeal cells, head muscles and excretory gland cells.

The protein localises to the cell membrane. Its function is as follows. G-protein coupled receptor for tyramine, a known neurotransmitter and neuromodulator and direct precursor of octopamine. The rank order of potency is tyramine &gt; octopamine &gt; dopamine &gt; serotonin &gt; epinephrine = norepinephrine. This is Tyramine receptor Ser-2 (ser-2) from Caenorhabditis elegans.